Consider the following 714-residue polypeptide: ATP-dependent DNA helicase DinG (714 aa).

One can recognise a Helicase ATP-binding domain in the interval 17–294; the sequence is ALQDQIPDFI…TSMEQFRPKT (278 aa). 54–61 lines the ATP pocket; that stretch reads APTGVGKT. Positions 120, 194, 199, and 205 each coordinate [4Fe-4S] cluster. Positions 248–251 match the DEAH box motif; the sequence is DEGH. Positions 517–698 constitute a Helicase C-terminal domain; it reads HIAEMAAYFR…VFPIEQPAVP (182 aa).

The protein belongs to the helicase family. DinG subfamily. Type 1 sub-subfamily. [4Fe-4S] cluster serves as cofactor.

It catalyses the reaction Couples ATP hydrolysis with the unwinding of duplex DNA at the replication fork by translocating in the 5'-3' direction. This creates two antiparallel DNA single strands (ssDNA). The leading ssDNA polymer is the template for DNA polymerase III holoenzyme which synthesizes a continuous strand.. The enzyme catalyses ATP + H2O = ADP + phosphate + H(+). In terms of biological role, DNA-dependent ATPase and 5'-3' DNA helicase. Unwinds D-loops, R-loops, forked DNA and G-quadruplex DNA. The polypeptide is ATP-dependent DNA helicase DinG (Salmonella choleraesuis (strain SC-B67)).